Consider the following 678-residue polypeptide: Glycine--tRNA ligase beta subunit (678 aa).

The protein belongs to the class-II aminoacyl-tRNA synthetase family. In terms of assembly, tetramer of two alpha and two beta subunits.

The protein resides in the cytoplasm. The enzyme catalyses tRNA(Gly) + glycine + ATP = glycyl-tRNA(Gly) + AMP + diphosphate. The protein is Glycine--tRNA ligase beta subunit of Streptococcus pneumoniae (strain ATCC 700669 / Spain 23F-1).